The chain runs to 306 residues: Curved DNA-binding protein (306 aa).

One can recognise a J domain in the interval 5–69 (DYYAIMGVKP…QRRAEYDQLW (65 aa)).

Its subcellular location is the cytoplasm. It localises to the nucleoid. In terms of biological role, DNA-binding protein that preferentially recognizes a curved DNA sequence. It is probably a functional analog of DnaJ; displays overlapping activities with DnaJ, but functions under different conditions, probably acting as a molecular chaperone in an adaptive response to environmental stresses other than heat shock. Lacks autonomous chaperone activity; binds native substrates and targets them for recognition by DnaK. Its activity is inhibited by the binding of CbpM. This chain is Curved DNA-binding protein, found in Salmonella arizonae (strain ATCC BAA-731 / CDC346-86 / RSK2980).